Here is a 601-residue protein sequence, read N- to C-terminus: Probable sphingosine-1-phosphate lyase (601 aa).

Lys360 is modified (N6-(pyridoxal phosphate)lysine).

The protein belongs to the group II decarboxylase family. Sphingosine-1-phosphate lyase subfamily. Requires pyridoxal 5'-phosphate as cofactor.

The catalysed reaction is sphinganine 1-phosphate = hexadecanal + phosphoethanolamine. In terms of biological role, cleaves phosphorylated sphingoid bases (PSBs), such as sphingosine-1-phosphate, into fatty aldehydes and phosphoethanolamine. Possibly implicated in influencing the macrophage autophagy pathway. This chain is Probable sphingosine-1-phosphate lyase, found in Legionella pneumophila subsp. pneumophila (strain Philadelphia 1 / ATCC 33152 / DSM 7513).